The following is a 98-amino-acid chain: Large ribosomal subunit protein eL21 (98 aa).

Belongs to the eukaryotic ribosomal protein eL21 family.

The polypeptide is Large ribosomal subunit protein eL21 (Methanocorpusculum labreanum (strain ATCC 43576 / DSM 4855 / Z)).